We begin with the raw amino-acid sequence, 163 residues long: uncharacterized protein (163 aa).

One can recognise an N-acetyltransferase domain in the interval 7 to 162 (ISISAVKLPQ…NVVYMRLEMS (156 aa)).

Belongs to the acetyltransferase family.

It is found in the cytoplasm. It localises to the nucleus. This is an uncharacterized protein from Schizosaccharomyces pombe (strain 972 / ATCC 24843) (Fission yeast).